The following is a 502-amino-acid chain: Glycerol kinase (502 aa).

Thr-14 contacts ADP. The ATP site is built by Thr-14, Thr-15, and Ser-16. Thr-14 provides a ligand contact to sn-glycerol 3-phosphate. An ADP-binding site is contributed by Arg-18. Positions 84, 85, 136, and 246 each coordinate sn-glycerol 3-phosphate. Positions 84, 85, 136, 246, and 247 each coordinate glycerol. ADP is bound by residues Thr-268 and Gly-311. The ATP site is built by Thr-268, Gly-311, Gln-315, and Gly-412. 2 residues coordinate ADP: Gly-412 and Asn-416.

It belongs to the FGGY kinase family. As to quaternary structure, homotetramer and homodimer (in equilibrium). Heterodimer with EIIA-Glc. Binds 1 zinc ion per glycerol kinase EIIA-Glc dimer. The zinc ion is important for dimerization.

The enzyme catalyses glycerol + ATP = sn-glycerol 3-phosphate + ADP + H(+). It participates in polyol metabolism; glycerol degradation via glycerol kinase pathway; sn-glycerol 3-phosphate from glycerol: step 1/1. Its activity is regulated as follows. Activity of this regulatory enzyme is affected by several metabolites. Allosterically and non-competitively inhibited by fructose 1,6-bisphosphate (FBP) and unphosphorylated phosphocarrier protein EIIA-Glc (III-Glc), an integral component of the bacterial phosphotransferase (PTS) system. Functionally, key enzyme in the regulation of glycerol uptake and metabolism. Catalyzes the phosphorylation of glycerol to yield sn-glycerol 3-phosphate. In Shigella flexneri, this protein is Glycerol kinase.